Consider the following 307-residue polypeptide: N-acetylmuramic acid 6-phosphate etherase (307 aa).

Residues 60-223 (AAQAIARGGR…STGAMVRIGK (164 aa)) enclose the SIS domain. The Proton donor role is filled by E88. The active site involves E119.

It belongs to the GCKR-like family. MurNAc-6-P etherase subfamily. In terms of assembly, homodimer.

The catalysed reaction is N-acetyl-D-muramate 6-phosphate + H2O = N-acetyl-D-glucosamine 6-phosphate + (R)-lactate. Its pathway is amino-sugar metabolism; N-acetylmuramate degradation. In terms of biological role, specifically catalyzes the cleavage of the D-lactyl ether substituent of MurNAc 6-phosphate, producing GlcNAc 6-phosphate and D-lactate. This Synechococcus elongatus (strain ATCC 33912 / PCC 7942 / FACHB-805) (Anacystis nidulans R2) protein is N-acetylmuramic acid 6-phosphate etherase.